The chain runs to 353 residues: Photosystem II protein D1 (353 aa).

Residue Thr-2 is modified to N-acetylthreonine. Thr-2 carries the phosphothreonine modification. The next 3 helical transmembrane spans lie at 29–46, 118–133, and 142–156; these read YIGW…TATS, HFLL…EWEL, and WIAV…AATA. Residue His-118 coordinates chlorophyll a. Tyr-126 is a binding site for pheophytin a. Residues Asp-170 and Glu-189 each contribute to the [CaMn4O5] cluster site. Residues 197–218 traverse the membrane as a helical segment; the sequence is FHMLGVAGVFGGSLFSAMHGSL. His-198 contacts chlorophyll a. A quinone is bound by residues His-215 and 264 to 265; that span reads SF. His-215 provides a ligand contact to Fe cation. Position 272 (His-272) interacts with Fe cation. A helical transmembrane segment spans residues 274-288; sequence FLAAWPVVGIWFTAL. [CaMn4O5] cluster-binding residues include His-332, Glu-333, Asp-342, and Ala-344. A propeptide spanning residues 345 to 353 is cleaved from the precursor; it reads AIEAPSTNG.

It belongs to the reaction center PufL/M/PsbA/D family. PSII is composed of 1 copy each of membrane proteins PsbA, PsbB, PsbC, PsbD, PsbE, PsbF, PsbH, PsbI, PsbJ, PsbK, PsbL, PsbM, PsbT, PsbX, PsbY, PsbZ, Psb30/Ycf12, at least 3 peripheral proteins of the oxygen-evolving complex and a large number of cofactors. It forms dimeric complexes. The cofactor is The D1/D2 heterodimer binds P680, chlorophylls that are the primary electron donor of PSII, and subsequent electron acceptors. It shares a non-heme iron and each subunit binds pheophytin, quinone, additional chlorophylls, carotenoids and lipids. D1 provides most of the ligands for the Mn4-Ca-O5 cluster of the oxygen-evolving complex (OEC). There is also a Cl(-1) ion associated with D1 and D2, which is required for oxygen evolution. The PSII complex binds additional chlorophylls, carotenoids and specific lipids.. In terms of processing, tyr-161 forms a radical intermediate that is referred to as redox-active TyrZ, YZ or Y-Z. Post-translationally, C-terminally processed by CTPA; processing is essential to allow assembly of the oxygen-evolving complex and thus photosynthetic growth.

The protein localises to the plastid. Its subcellular location is the chloroplast thylakoid membrane. It catalyses the reaction 2 a plastoquinone + 4 hnu + 2 H2O = 2 a plastoquinol + O2. Its function is as follows. Photosystem II (PSII) is a light-driven water:plastoquinone oxidoreductase that uses light energy to abstract electrons from H(2)O, generating O(2) and a proton gradient subsequently used for ATP formation. It consists of a core antenna complex that captures photons, and an electron transfer chain that converts photonic excitation into a charge separation. The D1/D2 (PsbA/PsbD) reaction center heterodimer binds P680, the primary electron donor of PSII as well as several subsequent electron acceptors. The polypeptide is Photosystem II protein D1 (Petunia hybrida (Petunia)).